We begin with the raw amino-acid sequence, 159 residues long: Large ribosomal subunit protein bL17 (159 aa).

Residues 124-135 show a composition bias toward low complexity; it reads EANRATRAAASK. The segment at 124 to 159 is disordered; it reads EANRATRAAASKQAEEAKAEEAEATEAEAEETTEEK. Over residues 145–159 the composition is skewed to acidic residues; it reads AEATEAEAEETTEEK.

This sequence belongs to the bacterial ribosomal protein bL17 family. As to quaternary structure, part of the 50S ribosomal subunit. Contacts protein L32.

This chain is Large ribosomal subunit protein bL17, found in Corynebacterium aurimucosum (strain ATCC 700975 / DSM 44827 / CIP 107346 / CN-1) (Corynebacterium nigricans).